The following is a 244-amino-acid chain: Inactive chemokine-binding protein (244 aa).

Residues 1–79 (MHVPASLQQS…STSVEDVDPP (79 aa)) are disordered. Residues 37 to 53 (QDQTPTNDKICQSVTEI) show a composition bias toward polar residues. A compositionally biased stretch (acidic residues) spans 54–77 (TESESDPDPEVESEDDSTSVEDVD).

The protein belongs to the orthopoxvirus OPG001 family.

The protein localises to the host cytoplasm. The protein is truncated in this vaccinal strain and presumably inactive, because the lack of signal peptide prevents the protein of being secreted. In the other strains inhibits host immune defense by binding to host chemokines. Binds host CC chemokines (beta chemokines) such as RANTES with high affinity, but not CXC or C chemokines (alpha and gamma chemokines). The chain is Inactive chemokine-binding protein (OPG001) from Vaccinia virus (strain Copenhagen) (VACV).